We begin with the raw amino-acid sequence, 264 residues long: 1-(5-phosphoribosyl)-5-[(5-phosphoribosylamino)methylideneamino] imidazole-4-carboxamide isomerase (264 aa).

The protein belongs to the HisA/HisF family.

The protein resides in the cytoplasm. The catalysed reaction is 1-(5-phospho-beta-D-ribosyl)-5-[(5-phospho-beta-D-ribosylamino)methylideneamino]imidazole-4-carboxamide = 5-[(5-phospho-1-deoxy-D-ribulos-1-ylimino)methylamino]-1-(5-phospho-beta-D-ribosyl)imidazole-4-carboxamide. It functions in the pathway amino-acid biosynthesis; L-histidine biosynthesis; L-histidine from 5-phospho-alpha-D-ribose 1-diphosphate: step 4/9. The chain is 1-(5-phosphoribosyl)-5-[(5-phosphoribosylamino)methylideneamino] imidazole-4-carboxamide isomerase (HIS6) from Yarrowia lipolytica (strain CLIB 122 / E 150) (Yeast).